The chain runs to 230 residues: Large ribosomal subunit protein uL1 (230 aa).

The protein belongs to the universal ribosomal protein uL1 family. Part of the 50S ribosomal subunit.

Functionally, binds directly to 23S rRNA. The L1 stalk is quite mobile in the ribosome, and is involved in E site tRNA release. In terms of biological role, protein L1 is also a translational repressor protein, it controls the translation of the L11 operon by binding to its mRNA. The polypeptide is Large ribosomal subunit protein uL1 (Acidiphilium cryptum (strain JF-5)).